The primary structure comprises 122 residues: Large ribosomal subunit protein uL14c (122 aa).

Belongs to the universal ribosomal protein uL14 family. In terms of assembly, part of the 50S ribosomal subunit.

The protein localises to the plastid. It localises to the chloroplast. Its function is as follows. Binds to 23S rRNA. The chain is Large ribosomal subunit protein uL14c from Cycas taitungensis (Prince sago).